Reading from the N-terminus, the 583-residue chain is Nuclear distribution protein nudE homolog 1 (583 aa).

A coiled-coil region spans residues 14-195 (ATLEDTLGWY…QDKFKKQESR (182 aa)). 3 disordered regions span residues 34-68 (LAEF…KAET), 211-339 (TFDG…TSNS), and 358-583 (HSVR…GETY). Positions 35–67 (AEFRDSSRELEQELEKDIERAEKQERHHQEKAE) are enriched in basic and acidic residues. Composition is skewed to polar residues over residues 219–235 (PGST…TDSK), 279–319 (RSRL…TMRT), 329–339 (SASNKLPTSNS), 379–392 (NVYS…SITI), and 399–422 (SGSA…STPK). Residues 453–469 (RPSSRASTSYATSYARP) are compositionally biased toward low complexity. Polar residues predominate over residues 529–538 (RRGTYSSQGG).

It belongs to the nudE family. In terms of assembly, self-associates. Interacts with PAC1.

It localises to the cytoplasm. Its subcellular location is the cytoskeleton. Functionally, required for nuclear migration. The polypeptide is Nuclear distribution protein nudE homolog 1 (NDE1) (Gibberella zeae (strain ATCC MYA-4620 / CBS 123657 / FGSC 9075 / NRRL 31084 / PH-1) (Wheat head blight fungus)).